We begin with the raw amino-acid sequence, 82 residues long: Sulfur carrier protein TusA (82 aa).

Residue Cys-19 is the Cysteine persulfide intermediate of the active site.

The protein belongs to the sulfur carrier protein TusA family.

It is found in the cytoplasm. Functionally, sulfur carrier protein which probably makes part of a sulfur-relay system. In Vibrio campbellii (strain ATCC BAA-1116), this protein is Sulfur carrier protein TusA.